The sequence spans 182 residues: uncharacterized protein (182 aa).

The next 2 helical transmembrane spans lie at I29–P49 and F63–L83.

It is found in the cell membrane. This is an uncharacterized protein from Ureaplasma parvum serovar 3 (strain ATCC 700970).